Consider the following 86-residue polypeptide: Cytochrome c6 (86 aa).

Residues Cys14, Cys17, His18, and Met58 each coordinate heme c.

The protein belongs to the cytochrome c family. PetJ subfamily. As to quaternary structure, monomer. Post-translationally, binds 1 heme c group covalently per subunit.

It localises to the plastid. It is found in the chloroplast thylakoid lumen. In terms of biological role, functions as an electron carrier between membrane-bound cytochrome b6-f and photosystem I in oxygenic photosynthesis. The chain is Cytochrome c6 (petJ) from Bumilleriopsis filiformis (Yellow-green alga).